The primary structure comprises 837 residues: Protein translocase subunit SecA (837 aa).

ATP-binding positions include Gln-85, 103–107 (GEGKT), and Asp-493. 4 residues coordinate Zn(2+): Cys-821, Cys-823, Cys-832, and His-833.

This sequence belongs to the SecA family. In terms of assembly, monomer and homodimer. Part of the essential Sec protein translocation apparatus which comprises SecA, SecYEG and auxiliary proteins SecDF. Other proteins may also be involved. It depends on Zn(2+) as a cofactor.

It localises to the cell membrane. Its subcellular location is the cytoplasm. It carries out the reaction ATP + H2O + cellular proteinSide 1 = ADP + phosphate + cellular proteinSide 2.. Its function is as follows. Part of the Sec protein translocase complex. Interacts with the SecYEG preprotein conducting channel. Has a central role in coupling the hydrolysis of ATP to the transfer of proteins into and across the cell membrane, serving as an ATP-driven molecular motor driving the stepwise translocation of polypeptide chains across the membrane. The chain is Protein translocase subunit SecA from Streptococcus pneumoniae (strain P1031).